The chain runs to 199 residues: MAEEQVLNTHNASILLSAANKSHYPKDDLPEIALAGRSNVGKSSFINTILGRKNLARTSSKPGKTQLLNFFNIDDKLRFVDVPGYGYAKVSKSERAKWGKMIEEYLTSRDNLRAVVSLVDLRHAPSKEDIQMYDFLKYYDIPVIVVATKADKIPRGKWNKHESVVKKALNFDNSDTFIVFSSVERIGIDDSWDAILEQV.

In terms of domain architecture, EngB-type G spans 28 to 199 (DLPEIALAGR…DSWDAILEQV (172 aa)). Residues 36-43 (GRSNVGKS), 63-67 (GKTQL), 81-84 (DVPG), 148-151 (TKAD), and 180-182 (FSS) contribute to the GTP site. 2 residues coordinate Mg(2+): Ser-43 and Thr-65.

It belongs to the TRAFAC class TrmE-Era-EngA-EngB-Septin-like GTPase superfamily. EngB GTPase family. It depends on Mg(2+) as a cofactor.

Functionally, necessary for normal cell division and for the maintenance of normal septation. The chain is Probable GTP-binding protein EngB from Streptococcus pyogenes serotype M28 (strain MGAS6180).